The primary structure comprises 519 residues: Cytochrome P450 52-E3 (519 aa).

The chain crosses the membrane as a helical span at residues 10–30; sequence VLGGISVSFLLAYQAIYFYFI. Cysteine 461 contacts heme.

This sequence belongs to the cytochrome P450 family. It depends on heme as a cofactor.

It is found in the membrane. It carries out the reaction an omega-methyl-long-chain fatty acid + reduced [NADPH--hemoprotein reductase] + O2 = an omega-hydroxy-long-chain fatty acid + oxidized [NADPH--hemoprotein reductase] + H2O + H(+). It catalyses the reaction (9Z)-octadecenoate + reduced [NADPH--hemoprotein reductase] + O2 = 18-hydroxy-(9Z)-octadecenoate + oxidized [NADPH--hemoprotein reductase] + H2O + H(+). The catalysed reaction is hexadecanoate + reduced [NADPH--hemoprotein reductase] + O2 = 16-hydroxyhexadecanoate + oxidized [NADPH--hemoprotein reductase] + H2O + H(+). The enzyme catalyses (9Z)-hexadecenoate + reduced [NADPH--hemoprotein reductase] + O2 = (9Z)-16-hydroxyhexadec-9-enoate + oxidized [NADPH--hemoprotein reductase] + H2O + H(+). In terms of biological role, catalyzes the terminal (at the omega-position) hydroxylation of a fatty acid. Probably involved in alkane metabolism. Has minor activity toward myristic acid, palmitic acid, palmitoleic acid and oleic acid. The polypeptide is Cytochrome P450 52-E3 (Starmerella bombicola (Yeast)).